We begin with the raw amino-acid sequence, 156 residues long: Transcription inhibitor protein Gfh1 (156 aa).

Residues 1–74 (MAREVKLTKA…LEDILSRAVI (74 aa)) adopt a coiled-coil conformation. Residues Glu-20 and Glu-24 each coordinate Zn(2+).

It belongs to the GreA/GreB family. In terms of assembly, interacts with RNAP.

In terms of biological role, inhibits all catalytic activities of RNA polymerase (RNAP) by partially occluding its substrate-binding site and preventing NTP binding. In Thermus thermophilus (strain ATCC 27634 / DSM 579 / HB8), this protein is Transcription inhibitor protein Gfh1 (gfh1).